The following is a 217-amino-acid chain: 3,4-dihydroxy-2-butanone 4-phosphate synthase (217 aa).

Residues 37 to 38 (RE), Asp-42, 150 to 154 (RGGHT), and Glu-174 contribute to the D-ribulose 5-phosphate site. Glu-38 is a binding site for Mg(2+). His-153 is a binding site for Mg(2+).

The protein belongs to the DHBP synthase family. As to quaternary structure, homodimer. Mg(2+) is required as a cofactor. It depends on Mn(2+) as a cofactor.

The enzyme catalyses D-ribulose 5-phosphate = (2S)-2-hydroxy-3-oxobutyl phosphate + formate + H(+). It participates in cofactor biosynthesis; riboflavin biosynthesis; 2-hydroxy-3-oxobutyl phosphate from D-ribulose 5-phosphate: step 1/1. Its function is as follows. Catalyzes the conversion of D-ribulose 5-phosphate to formate and 3,4-dihydroxy-2-butanone 4-phosphate. The sequence is that of 3,4-dihydroxy-2-butanone 4-phosphate synthase from Escherichia fergusonii (strain ATCC 35469 / DSM 13698 / CCUG 18766 / IAM 14443 / JCM 21226 / LMG 7866 / NBRC 102419 / NCTC 12128 / CDC 0568-73).